We begin with the raw amino-acid sequence, 334 residues long: Flavonol synthase/flavanone 3-hydroxylase (334 aa).

The 100-residue stretch at 196 to 295 (DLVYLMKINY…RMSWPVFLEP (100 aa)) folds into the Fe2OG dioxygenase domain. Residues His-220, Asp-222, and His-276 each contribute to the Fe cation site.

It belongs to the iron/ascorbate-dependent oxidoreductase family. It depends on Fe cation as a cofactor. L-ascorbate serves as cofactor.

The protein localises to the cytoplasm. The enzyme catalyses a (2R,3R)-dihydroflavonol + 2-oxoglutarate + O2 = a flavonol + succinate + CO2 + H2O. It catalyses the reaction a (2S)-flavan-4-one + 2-oxoglutarate + O2 = a (2R,3R)-dihydroflavonol + succinate + CO2. The protein operates within secondary metabolite biosynthesis; flavonoid biosynthesis. Catalyzes the formation of flavonols from dihydroflavonols. It can act on dihydrokaempferol to produce kaempferol, on dihydroquercetin to produce quercitin and on dihydromyricetin to produce myricetin. This chain is Flavonol synthase/flavanone 3-hydroxylase (FLS), found in Eustoma exaltatum subsp. russellianum (Bluebells).